Consider the following 266-residue polypeptide: Interleukin-1 beta (266 aa).

Residues 1–113 (MAPVPEPINE…ETSSDEFLCD (113 aa)) constitute a propeptide that is removed on maturation.

This sequence belongs to the IL-1 family. Monomer. In its precursor form, weakly interacts with full-length MEFV; the mature cytokine does not interact at all. Interacts with integrins ITGAV:ITGBV and ITGA5:ITGB1; integrin-binding is required for IL1B signaling. Interacts with cargo receptor TMED10; the interaction is direct and is required for the secretion of IL1B mature form. Interacts with HSP90AB1; the interaction facilitates cargo translocation into the ERGIC. Interacts with HSP90B1; the interaction facilitates cargo translocation into the ERGIC.

It is found in the cytoplasm. It localises to the cytosol. Its subcellular location is the secreted. The protein localises to the lysosome. The protein resides in the extracellular exosome. In terms of biological role, potent pro-inflammatory cytokine. Initially discovered as the major endogenous pyrogen, induces prostaglandin synthesis, neutrophil influx and activation, T-cell activation and cytokine production, B-cell activation and antibody production, and fibroblast proliferation and collagen production. Promotes Th17 differentiation of T-cells. Synergizes with IL12/interleukin-12 to induce IFNG synthesis from T-helper 1 (Th1) cells. Plays a role in angiogenesis by inducing VEGF production synergistically with TNF and IL6. Involved in transduction of inflammation downstream of pyroptosis: its mature form is specifically released in the extracellular milieu by passing through the gasdermin-D (GSDMD) pore. This Cervus elaphus (Red deer) protein is Interleukin-1 beta (IL1B).